The following is a 661-amino-acid chain: DnaJ protein ERDJ2B (661 aa).

At 1–8 (MAESEENS) the chain is on the lumenal side. Residues 9–29 (VLFPIFILTMMAIPLVPYTFV) form a helical membrane-spanning segment. Over 30 to 65 (KLSRAFSKKQRSIHCQCLECDRSGKYKRSISQSISS) the chain is Cytoplasmic. The chain crosses the membrane as a helical span at residues 66-86 (FTSCSNLTVVLLWIVMIFLIY). Residues 87–190 (HTKNMSRESQ…FILNMNGESG (104 aa)) are Lumenal-facing. Asparagine 90 is a glycosylation site (N-linked (GlcNAc...) asparagine). The 66-residue stretch at 99–164 (EPFGILGLEP…LSRENFEKYG (66 aa)) folds into the J domain. Residues 191-211 (GILLLCTVGLCILLPLVIASI) traverse the membrane as a helical segment. The SEC63 domain maps to 206–597 (LVIASIYLWR…IGCDQKTSLK (392 aa)). Over 212–661 (YLWRSSKYTG…SSEESGSDEE (450 aa)) the chain is Cytoplasmic. The tract at residues 608-661 (EGENAEEGLEEEDDEIEEEDYESEYSEDEEDKKRGSKKKVNKESSSEESGSDEE) is disordered. Over residues 609–637 (GENAEEGLEEEDDEIEEEDYESEYSEDEE) the composition is skewed to acidic residues.

In terms of assembly, interacts with OEP61/TPR7. As to expression, expressed in leaves, flower buds and flowers.

The protein localises to the endoplasmic reticulum membrane. In terms of biological role, required for integral membrane and secreted preprotein translocation across the endoplasmic reticulum membrane. The sequence is that of DnaJ protein ERDJ2B (ERDJ2B) from Arabidopsis thaliana (Mouse-ear cress).